Consider the following 37-residue polypeptide: L-amino-acid oxidase (37 aa).

This sequence belongs to the flavin monoamine oxidase family. FIG1 subfamily. In terms of assembly, homodimer; non-covalently linked. FAD serves as cofactor. N-Glycosylated. As to expression, expressed by the venom gland.

It localises to the secreted. The catalysed reaction is an L-alpha-amino acid + O2 + H2O = a 2-oxocarboxylate + H2O2 + NH4(+). The enzyme catalyses L-leucine + O2 + H2O = 4-methyl-2-oxopentanoate + H2O2 + NH4(+). It carries out the reaction L-phenylalanine + O2 + H2O = 3-phenylpyruvate + H2O2 + NH4(+). It catalyses the reaction L-tryptophan + O2 + H2O = indole-3-pyruvate + H2O2 + NH4(+). The catalysed reaction is L-methionine + O2 + H2O = 4-methylsulfanyl-2-oxobutanoate + H2O2 + NH4(+). The enzyme catalyses L-isoleucine + O2 + H2O = (S)-3-methyl-2-oxopentanoate + H2O2 + NH4(+). It carries out the reaction L-arginine + O2 + H2O = 5-guanidino-2-oxopentanoate + H2O2 + NH4(+). It catalyses the reaction L-histidine + O2 + H2O = 3-(imidazol-5-yl)pyruvate + H2O2 + NH4(+). The catalysed reaction is L-valine + O2 + H2O = 3-methyl-2-oxobutanoate + H2O2 + NH4(+). Its function is as follows. Catalyzes an oxidative deamination of predominantly hydrophobic and aromatic L-amino acids, thus producing hydrogen peroxide that may contribute to the diverse toxic effects of this enzyme. Is highly active on L-Leu, L-Met, moderately active on L-Arg, L-Trp, L-Phe, L-Val, L-His, and L-Ile, and is weakly or not active on L-Cys, L-Lys, L-Ala, L-Thr, L-Asp, L-Ser, and L-Pro. Exhibits diverse biological activities, such as hemorrhage, edema, apoptosis of vascular endothelial cells or tumor cell lines, as well as regulation of platelet aggregation. Effects of snake L-amino oxidases on platelets are controversial, since they either induce aggregation or inhibit agonist-induced aggregation. These different effects are probably due to different experimental conditions. This protein induce hemolysis and has antibacterial and antiparasitic activities (against the Gram-positive S.aureus). Tested in vivo, this protein significantly inhibits Ehrlich ascite tumors growth and induces an influx of polymorphonuclear cells, as well as spontaneous liberation of hydrogen peroxide from peritoneal macrophages. This chain is L-amino-acid oxidase, found in Bothrops jararaca (Jararaca).